The chain runs to 185 residues: HTH-type transcriptional regulator Hpr (185 aa).

In terms of domain architecture, HTH marR-type spans 13–157 (AMIFSQRIAQ…LIAILRNIYG (145 aa)). The H-T-H motif DNA-binding region spans 63-86 (ISEIAKFGVMHVSTAFNFSKKLEE).

Homodimer.

In terms of biological role, negative regulator of protease production and sporulation. The protein is HTH-type transcriptional regulator Hpr of Bacillus cereus (strain G9842).